A 592-amino-acid chain; its full sequence is A-type ATP synthase subunit A (592 aa).

ATP is bound at residue 233-240 (GPFGSGKT).

This sequence belongs to the ATPase alpha/beta chains family. Has multiple subunits with at least A(3), B(3), C, D, E, F, H, I and proteolipid K(x).

The protein localises to the cell membrane. It carries out the reaction ATP + H2O + 4 H(+)(in) = ADP + phosphate + 5 H(+)(out). In terms of biological role, component of the A-type ATP synthase that produces ATP from ADP in the presence of a proton gradient across the membrane. The A chain is the catalytic subunit. This Saccharolobus islandicus (strain M.16.27) (Sulfolobus islandicus) protein is A-type ATP synthase subunit A.